The primary structure comprises 284 residues: Ribosomal RNA small subunit methyltransferase A (284 aa).

6 residues coordinate S-adenosyl-L-methionine: asparagine 28, leucine 30, glycine 55, glutamate 77, aspartate 103, and asparagine 123.

The protein belongs to the class I-like SAM-binding methyltransferase superfamily. rRNA adenine N(6)-methyltransferase family. RsmA subfamily.

It is found in the cytoplasm. The catalysed reaction is adenosine(1518)/adenosine(1519) in 16S rRNA + 4 S-adenosyl-L-methionine = N(6)-dimethyladenosine(1518)/N(6)-dimethyladenosine(1519) in 16S rRNA + 4 S-adenosyl-L-homocysteine + 4 H(+). Functionally, specifically dimethylates two adjacent adenosines (A1518 and A1519) in the loop of a conserved hairpin near the 3'-end of 16S rRNA in the 30S particle. May play a critical role in biogenesis of 30S subunits. The protein is Ribosomal RNA small subunit methyltransferase A of Bradyrhizobium diazoefficiens (strain JCM 10833 / BCRC 13528 / IAM 13628 / NBRC 14792 / USDA 110).